A 705-amino-acid polypeptide reads, in one-letter code: 1,4-alpha-glucan branching enzyme GlgB (705 aa).

Catalysis depends on D393, which acts as the Nucleophile. E446 acts as the Proton donor in catalysis.

It belongs to the glycosyl hydrolase 13 family. GlgB subfamily. In terms of assembly, monomer.

The enzyme catalyses Transfers a segment of a (1-&gt;4)-alpha-D-glucan chain to a primary hydroxy group in a similar glucan chain.. The protein operates within glycan biosynthesis; glycogen biosynthesis. Functionally, catalyzes the formation of the alpha-1,6-glucosidic linkages in glycogen by scission of a 1,4-alpha-linked oligosaccharide from growing alpha-1,4-glucan chains and the subsequent attachment of the oligosaccharide to the alpha-1,6 position. The protein is 1,4-alpha-glucan branching enzyme GlgB of Picrophilus torridus (strain ATCC 700027 / DSM 9790 / JCM 10055 / NBRC 100828 / KAW 2/3).